The chain runs to 392 residues: uncharacterized protein (392 aa).

This sequence belongs to the glycosyltransferase 2 family.

This is an uncharacterized protein from Bacillus subtilis (strain 168).